A 429-amino-acid polypeptide reads, in one-letter code: GTPase Obg (429 aa).

The Obg domain occupies 1–158 (MFVDHVKIYV…LNVILELKVL (158 aa)). The segment at 119 to 143 (AGRGGRGNSRFATPANPAPELSEKG) is disordered. The 171-residue stretch at 159-329 (ADVGLVGFPS…LLFAIADLLE (171 aa)) folds into the OBG-type G domain. GTP-binding positions include 165-172 (GFPSVGKS), 190-194 (FTTIV), 212-215 (DLPG), 282-285 (NKMD), and 310-312 (SAV). The Mg(2+) site is built by Ser-172 and Thr-192. The OCT domain maps to 351–429 (KHEAKGEDFE…LQEFEFEFVD (79 aa)).

The protein belongs to the TRAFAC class OBG-HflX-like GTPase superfamily. OBG GTPase family. Monomer. Mg(2+) is required as a cofactor.

The protein resides in the cytoplasm. Its function is as follows. An essential GTPase which binds GTP, GDP and possibly (p)ppGpp with moderate affinity, with high nucleotide exchange rates and a fairly low GTP hydrolysis rate. Plays a role in control of the cell cycle, stress response, ribosome biogenesis and in those bacteria that undergo differentiation, in morphogenesis control. The protein is GTPase Obg of Lysinibacillus sphaericus (strain C3-41).